Consider the following 143-residue polypeptide: Large ribosomal subunit protein uL15 (143 aa).

The tract at residues 1–59 (MELNGIKPADGAKHYKRRVGRGIGSGIGKTAGRGHKGQKSRAGGYHKVGFEGGQMPMQR) is disordered. The span at 21 to 31 (RGIGSGIGKTA) shows a compositional bias: gly residues.

The protein belongs to the universal ribosomal protein uL15 family. In terms of assembly, part of the 50S ribosomal subunit.

Binds to the 23S rRNA. The sequence is that of Large ribosomal subunit protein uL15 from Albidiferax ferrireducens (strain ATCC BAA-621 / DSM 15236 / T118) (Rhodoferax ferrireducens).